The sequence spans 314 residues: tRNA dimethylallyltransferase (314 aa).

12–19 (GPTASGKT) lines the ATP pocket. 14-19 (TASGKT) serves as a coordination point for substrate. 2 interaction with substrate tRNA regions span residues 37–40 (DSAQ) and 161–165 (QRIQR).

The protein belongs to the IPP transferase family. Monomer. Mg(2+) is required as a cofactor.

It carries out the reaction adenosine(37) in tRNA + dimethylallyl diphosphate = N(6)-dimethylallyladenosine(37) in tRNA + diphosphate. Its function is as follows. Catalyzes the transfer of a dimethylallyl group onto the adenine at position 37 in tRNAs that read codons beginning with uridine, leading to the formation of N6-(dimethylallyl)adenosine (i(6)A). This is tRNA dimethylallyltransferase from Nitrosococcus oceani (strain ATCC 19707 / BCRC 17464 / JCM 30415 / NCIMB 11848 / C-107).